Consider the following 199-residue polypeptide: Probable V-type proton ATPase 20 kDa proteolipid subunit (199 aa).

Residues 1 to 3 (MSL) lie on the Vacuolar side of the membrane. The chain crosses the membrane as a helical span at residues 4–24 (FSTSLWTTTVMSIIVGLYMLF). The Cytoplasmic segment spans residues 25 to 46 (HNSGESFDFGSFLLDTSPYTWG). Residues 47–67 (LLGIASCVAFGIIGAAWGIFI) traverse the membrane as a helical segment. Residues 68 to 86 (CGTSILGGAVKAPRIKTKN) lie on the Vacuolar side of the membrane. The chain crosses the membrane as a helical span at residues 87-107 (LISIIFCEVVAIYSLIIAIVF). The Cytoplasmic segment spans residues 108-130 (SAKINDINPAGFYTKSHYYTGFA). A helical membrane pass occupies residues 131 to 151 (LFWGGITVGLCNLICGVCVGI). At 152–170 (TGSSAALADAQDASLFVKV) the chain is on the vacuolar side. Residues 171-191 (LVVEIFGSVLGLFGLIVGLLI) form a helical membrane-spanning segment. Over 192–199 (GGKASDFS) the chain is Cytoplasmic.

Belongs to the V-ATPase proteolipid subunit family. In terms of assembly, V-ATPase is a heteromultimeric enzyme composed of a peripheral catalytic V1 complex (components A to H) attached to an integral membrane V0 proton pore complex (components: a, c, c', c'', d, e, f and VOA1). The decameric c-ring forms the proton-conducting pore, and is composed of eight proteolipid subunits c, one subunit c' and one subunit c''.

Its subcellular location is the vacuole membrane. Functionally, proton-conducting pore forming subunit of the V0 complex of vacuolar(H+)-ATPase (V-ATPase), a multisubunit enzyme composed of a peripheral complex (V1) that hydrolyzes ATP and a membrane integral complex (V0) that translocates protons. V-ATPase is responsible for acidifying and maintaining the pH of intracellular compartments. This Schizosaccharomyces pombe (strain 972 / ATCC 24843) (Fission yeast) protein is Probable V-type proton ATPase 20 kDa proteolipid subunit (vma16).